Reading from the N-terminus, the 300-residue chain is GTPase Era (300 aa).

The Era-type G domain maps to Arg-8 to Glu-176. Positions Gly-16–Ser-23 are G1. Gly-16–Ser-23 lines the GTP pocket. The segment at Gln-42–His-46 is G2. Residues Asp-63 to Gly-66 form a G3 region. GTP-binding positions include Asp-63–Met-67 and Asn-125–Asp-128. Positions Asn-125–Asp-128 are G4. The tract at residues Ile-155–Ala-157 is G5. The KH type-2 domain occupies Val-199–Gly-283.

Belongs to the TRAFAC class TrmE-Era-EngA-EngB-Septin-like GTPase superfamily. Era GTPase family. As to quaternary structure, monomer.

It is found in the cytoplasm. Its subcellular location is the cell inner membrane. An essential GTPase that binds both GDP and GTP, with rapid nucleotide exchange. Plays a role in 16S rRNA processing and 30S ribosomal subunit biogenesis and possibly also in cell cycle regulation and energy metabolism. This Pseudomonas syringae pv. tomato (strain ATCC BAA-871 / DC3000) protein is GTPase Era.